The following is a 596-amino-acid chain: PDZ and LIM domain protein 5 (596 aa).

Serine 2 carries the post-translational modification N-acetylserine. The residue at position 2 (serine 2) is a Phosphoserine. A PDZ domain is found at 2–85 (SNYSVSLVGP…SLNMTLQRAS (84 aa)). Lysine 89 is subject to N6-acetyllysine; alternate. Position 89 is an N6-succinyllysine; alternate (lysine 89). Lysine 89 is covalently cross-linked (Glycyl lysine isopeptide (Lys-Gly) (interchain with G-Cter in SUMO2); alternate). Residues serine 111, serine 134, and serine 137 each carry the phosphoserine modification. Disordered stretches follow at residues 121-165 (NNMA…SPSP), 196-240 (AGKT…GPPR), and 255-340 (THSD…RPGV). The segment covering 134–143 (SVSSPKVTSI) has biased composition (polar residues). Residues 144 to 165 (PSPSSAFTPAHATTSSHASPSP) show a composition bias toward low complexity. Polar residues-rich tracts occupy residues 205-219 (RQPT…TSQE) and 226-237 (RGSQGDSKQQNG). 2 positions are modified to phosphoserine: serine 228 and serine 260. Basic and acidic residues-rich tracts occupy residues 258–273 (DASK…DWRP) and 293–304 (EHLKESEADNTK). Residues 305–335 (KANNSQEPSPQLASSVASTRSMPESLDSPTS) show a composition bias toward polar residues. Phosphoserine occurs at positions 309, 313, and 322. Lysine 350 carries the post-translational modification N6-acetyllysine. The interval 354-381 (STGVIKSPSWQRPNQGVPSTGRISNSAT) is disordered. 2 positions are modified to phosphoserine: serine 360 and serine 362. The span at 361-381 (PSWQRPNQGVPSTGRISNSAT) shows a compositional bias: polar residues. LIM zinc-binding domains follow at residues 418 to 477 (PMCA…FFAP), 477 to 536 (PECG…LFGT), and 536 to 596 (TICH…SVNF).

As to quaternary structure, interacts with various PKC isoforms through the LIM domains. Interacts with actin and alpha-actinin through the PDZ domain. Interacts (via LIM domains) with SIPA1L1/SPAR; this interaction may occur preferentially with isoform 1. In terms of tissue distribution, heart and skeletal muscle specific. Expression is commonly increased in the brain of patients with bipolar disorder, schizophrenia, and major depression.

The protein localises to the postsynaptic density. Its subcellular location is the presynapse. The protein resides in the postsynapse. It localises to the cytoplasm. It is found in the cytosol. In terms of biological role, may play an important role in the heart development by scaffolding PKC to the Z-disk region. May play a role in the regulation of cardiomyocyte expansion. Isoforms lacking the LIM domains may negatively modulate the scaffolding activity of isoform 1. Overexpression promotes the development of heart hypertrophy. Contributes to the regulation of dendritic spine morphogenesis in neurons. May be required to restrain postsynaptic growth of excitatory synapses. Isoform 1, but not isoform 2, expression favors spine thinning and elongation. This Homo sapiens (Human) protein is PDZ and LIM domain protein 5.